We begin with the raw amino-acid sequence, 134 residues long: Mediator of RNA polymerase II transcription subunit 10 (134 aa).

It belongs to the Mediator complex subunit 10 family. In terms of assembly, component of the Mediator complex.

It localises to the nucleus. In terms of biological role, component of the Mediator complex, a coactivator involved in the regulated transcription of nearly all RNA polymerase II-dependent genes. Mediator functions as a bridge to convey information from gene-specific regulatory proteins to the basal RNA polymerase II transcription machinery. Mediator is recruited to promoters by direct interactions with regulatory proteins and serves as a scaffold for the assembly of a functional preinitiation complex with RNA polymerase II and the general transcription factors. Negatively regulates the Wnt signaling pathway and positively regulates the Nodal signaling pathway. Required for cardiac cushion formation. The protein is Mediator of RNA polymerase II transcription subunit 10 (med10) of Danio rerio (Zebrafish).